We begin with the raw amino-acid sequence, 779 residues long: Aconitate hydratase, mitochondrial (779 aa).

Residues 1-28 (MIAMDRIARIPIARWTSRAFRVSAAARQ) constitute a mitochondrion transit peptide. Substrate-binding positions include glutamine 97 and 190–192 (DSH). Residues cysteine 383, cysteine 446, and cysteine 449 each contribute to the [4Fe-4S] cluster site. Residues arginine 472, arginine 477, arginine 605, and 668–669 (SR) contribute to the substrate site.

Belongs to the aconitase/IPM isomerase family. Monomer. [4Fe-4S] cluster is required as a cofactor.

Its subcellular location is the mitochondrion. It carries out the reaction citrate = D-threo-isocitrate. The protein operates within carbohydrate metabolism; tricarboxylic acid cycle; isocitrate from oxaloacetate: step 2/2. Its function is as follows. Catalyzes the isomerization of citrate to isocitrate via cis-aconitate. The polypeptide is Aconitate hydratase, mitochondrial (Gracilaria gracilis (Red alga)).